The sequence spans 291 residues: tRNA dimethylallyltransferase (291 aa).

Residue 9–16 (GTTASGKT) coordinates ATP. Residue 11-16 (TASGKT) participates in substrate binding. Positions 34–37 (DSLC) are interaction with substrate tRNA.

The protein belongs to the IPP transferase family. As to quaternary structure, monomer. Mg(2+) serves as cofactor.

The enzyme catalyses adenosine(37) in tRNA + dimethylallyl diphosphate = N(6)-dimethylallyladenosine(37) in tRNA + diphosphate. Catalyzes the transfer of a dimethylallyl group onto the adenine at position 37 in tRNAs that read codons beginning with uridine, leading to the formation of N6-(dimethylallyl)adenosine (i(6)A). This Campylobacter lari (strain RM2100 / D67 / ATCC BAA-1060) protein is tRNA dimethylallyltransferase.